Consider the following 898-residue polypeptide: Alanine--tRNA ligase (898 aa).

Zn(2+)-binding residues include histidine 589, histidine 593, cysteine 693, and histidine 697.

It belongs to the class-II aminoacyl-tRNA synthetase family. It depends on Zn(2+) as a cofactor.

The protein resides in the cytoplasm. It catalyses the reaction tRNA(Ala) + L-alanine + ATP = L-alanyl-tRNA(Ala) + AMP + diphosphate. Functionally, catalyzes the attachment of alanine to tRNA(Ala) in a two-step reaction: alanine is first activated by ATP to form Ala-AMP and then transferred to the acceptor end of tRNA(Ala). Also edits incorrectly charged Ser-tRNA(Ala) and Gly-tRNA(Ala) via its editing domain. This Methanothermobacter thermautotrophicus (strain ATCC 29096 / DSM 1053 / JCM 10044 / NBRC 100330 / Delta H) (Methanobacterium thermoautotrophicum) protein is Alanine--tRNA ligase.